We begin with the raw amino-acid sequence, 675 residues long: Heat shock 70 kDa protein 12A (675 aa).

The segment covering Met-1–Arg-13 has biased composition (basic and acidic residues). The disordered stretch occupies residues Met-1–Thr-45. The residue at position 2 (Ala-2) is an N-acetylalanine. Composition is skewed to polar residues over residues Ala-16 to Ala-25 and Thr-34 to Thr-45.

The protein belongs to the heat shock protein 70 family. As to quaternary structure, interacts with SORL1 (via cytosolic C-terminus); this interaction affects SORL1 internalization and subcellular localization. As to expression, widely expressed with highest levels in brain, kidney and muscle.

It is found in the cytoplasm. The protein resides in the nucleus. Functionally, adapter protein for SORL1, but not SORT1. Delays SORL1 internalization and affects SORL1 subcellular localization. The sequence is that of Heat shock 70 kDa protein 12A (HSPA12A) from Homo sapiens (Human).